Reading from the N-terminus, the 663-residue chain is DNA ligase (663 aa).

Residues 34-38 (DYEYD), 83-84 (SL), and E114 contribute to the NAD(+) site. K116 serves as the catalytic N6-AMP-lysine intermediate. The NAD(+) site is built by R137, E171, K286, and K310. Positions 404, 407, 422, and 427 each coordinate Zn(2+). One can recognise a BRCT domain in the interval 585-663 (TVESPLTGKN…ADEFIKLANG (79 aa)).

It belongs to the NAD-dependent DNA ligase family. LigA subfamily. Requires Mg(2+) as cofactor. It depends on Mn(2+) as a cofactor.

It carries out the reaction NAD(+) + (deoxyribonucleotide)n-3'-hydroxyl + 5'-phospho-(deoxyribonucleotide)m = (deoxyribonucleotide)n+m + AMP + beta-nicotinamide D-nucleotide.. Functionally, DNA ligase that catalyzes the formation of phosphodiester linkages between 5'-phosphoryl and 3'-hydroxyl groups in double-stranded DNA using NAD as a coenzyme and as the energy source for the reaction. It is essential for DNA replication and repair of damaged DNA. This chain is DNA ligase, found in Brachyspira hyodysenteriae (strain ATCC 49526 / WA1).